We begin with the raw amino-acid sequence, 555 residues long: Perforin-1 (555 aa).

The first 21 residues, 1-21, serve as a signal peptide directing secretion; it reads MAARLLLLGILLLLLPLPVPA. Intrachain disulfides connect Cys-23/Cys-76, Cys-31/Cys-73, and Cys-102/Cys-176. One can recognise an MACPF domain in the interval 27–375; that stretch reads ARSECKRSHK…QYLTDRARWR (349 aa). A beta stranded membrane pass occupies residues 129–149; sequence WKVGLDVTPKPTSNVHVSVAG. Asn-205 carries an N-linked (GlcNAc...) asparagine glycan. 4 cysteine pairs are disulfide-bonded: Cys-242–Cys-408, Cys-377–Cys-393, Cys-381–Cys-395, and Cys-397–Cys-407. Residues 257 to 279 traverse the membrane as a beta stranded segment; it reads CLTVEAQVNIGIHGSISAEAKAC. The EGF-like domain maps to 376–408; it reads DCSRPCPPGRQKSPRDPCQCVCHGSAVTTQDCC. The C2 domain occupies 397–519; that stretch reads CHGSAVTTQD…CNLNHGHLKF (123 aa). Residues Gly-429, Asp-430, Thr-433, Ala-434, Asp-436, Asp-484, Asp-486, Asp-490, Asp-491, and Asp-492 each coordinate Ca(2+). 2 disulfide bridges follow: Cys-497–Cys-510 and Cys-525–Cys-534. The N-linked (GlcNAc...) asparagine glycan is linked to Asn-549.

The protein belongs to the complement C6/C7/C8/C9 family. Monomer, as soluble protein. Homooligomer; homooligomerizes to form a pore-forming ring. Ca(2+) is required as a cofactor. Post-translationally, N-glycosylated.

It is found in the cytolytic granule. The protein localises to the secreted. Its subcellular location is the cell membrane. It localises to the endosome lumen. In terms of biological role, pore-forming protein that plays a key role in granzyme-mediated programmed cell death, and in defense against virus-infected or neoplastic cells. Plays an important role in killing other cells that are recognized as non-self by the immune system, e.g. in transplant rejection or some forms of autoimmune disease. Can insert into the membrane of target cells in its calcium-bound form, oligomerize and form large pores. Promotes cytolysis and apoptosis of target cells by mediating the passage and uptake of cytotoxic granzymes. Facilitates the delivery of cationic cargo protein, while anionic or neural proteins are not delivered efficiently. Perforin pores allow the release of mature caspase-7 (CASP7) into the extracellular milieu. The polypeptide is Perforin-1 (PRF1) (Homo sapiens (Human)).